Here is a 213-residue protein sequence, read N- to C-terminus: Uridine kinase (213 aa).

15–22 (GASASGKS) contacts ATP.

This sequence belongs to the uridine kinase family.

The protein localises to the cytoplasm. It catalyses the reaction uridine + ATP = UMP + ADP + H(+). The enzyme catalyses cytidine + ATP = CMP + ADP + H(+). Its pathway is pyrimidine metabolism; CTP biosynthesis via salvage pathway; CTP from cytidine: step 1/3. It functions in the pathway pyrimidine metabolism; UMP biosynthesis via salvage pathway; UMP from uridine: step 1/1. This Pectobacterium atrosepticum (strain SCRI 1043 / ATCC BAA-672) (Erwinia carotovora subsp. atroseptica) protein is Uridine kinase.